The sequence spans 352 residues: Phosphate acyltransferase (352 aa).

The segment covering Glu-328 to Gly-339 has biased composition (basic and acidic residues). The disordered stretch occupies residues Glu-328–Ser-352.

The protein belongs to the PlsX family. As to quaternary structure, homodimer. Probably interacts with PlsY.

It is found in the cytoplasm. It carries out the reaction a fatty acyl-[ACP] + phosphate = an acyl phosphate + holo-[ACP]. It participates in lipid metabolism; phospholipid metabolism. Its function is as follows. Catalyzes the reversible formation of acyl-phosphate (acyl-PO(4)) from acyl-[acyl-carrier-protein] (acyl-ACP). This enzyme utilizes acyl-ACP as fatty acyl donor, but not acyl-CoA. The sequence is that of Phosphate acyltransferase from Geobacter sp. (strain M21).